The primary structure comprises 338 residues: MISLDGIRKVFKAKRGSVTAVDGVNLKINEGEIFGVIGYSGAGKSTLIRMLNMLERPTEGSVIVAGKDLSKLSDRDLRIERQKIGMIFQHFNLLWSRTVRKNIAFPLEIAGVPKKEREKRVDELINLVGLEGREEAYPSQLSGGQKQRVGIARALANNPKVLLCDEATSALDPKTTDSILDLLVDINEKLGLTIVLITHEMHVIRKICHRVAVMEAGKVVEEGPVLDVFRKPKEHITKEFVKQVTEPEETVQHLLNEVKSGRIVQLTFVGESAEKPLITNLIRTFAVDVNILQGKISKTQEGSYGTLFIHLDGPKDEIEKAITYMHEQQLELEVIAGA.

The 240-residue stretch at Ile-2–Val-241 folds into the ABC transporter domain. ATP is bound at residue Gly-38–Ser-45.

This sequence belongs to the ABC transporter superfamily. Methionine importer (TC 3.A.1.24) family. The complex is composed of two ATP-binding proteins (MetN), two transmembrane proteins (MetI) and a solute-binding protein (MetQ).

The protein localises to the cell membrane. It carries out the reaction L-methionine(out) + ATP + H2O = L-methionine(in) + ADP + phosphate + H(+). The catalysed reaction is D-methionine(out) + ATP + H2O = D-methionine(in) + ADP + phosphate + H(+). In terms of biological role, part of the ABC transporter complex MetNIQ involved in methionine import. Responsible for energy coupling to the transport system. The polypeptide is Methionine import ATP-binding protein MetN (Halalkalibacterium halodurans (strain ATCC BAA-125 / DSM 18197 / FERM 7344 / JCM 9153 / C-125) (Bacillus halodurans)).